The sequence spans 359 residues: MEGDVGIGLVCQNTMDGKASNGNGLEKTVPSCCLKAMACVPEDDAKCHSTVVSGWFSEPHPRSGKKGGKAVYFNNPMWPGEAHSLKVEKVLFKDKSDFQEVLVFESATYGKVLVLDGIVQLTEKDECAYQEMIAHLPLCSISSPKNVLVVGGGDGGVLREISRHSSVEVIDICEIDKMVIDVSKKFFPELAVGFDDPRVQLHIGDAAEFLRKSPEGKYDAIIVDSSDPVGPALALVEKPFFETLARALKPGGVLCNMAESMWLHTHLIEDMISICRQTFKSVHYAWSSVPTYPSGVIGFVLCSTEGPAVDFKNPINPIEKLDGAMTHKRELKFYNSDMHRAAFALPTFLRREVASLLAS.

The 252-residue stretch at 53–304 (SGWFSEPHPR…GVIGFVLCST (252 aa)) folds into the PABS domain. Residue Gln-99 coordinates S-adenosyl 3-(methylsulfanyl)propylamine. Tyr-129 provides a ligand contact to spermidine. Position 130 (Gln-130) interacts with S-adenosyl 3-(methylsulfanyl)propylamine. Residue Asp-154 participates in spermidine binding. S-adenosyl 3-(methylsulfanyl)propylamine contacts are provided by residues Glu-174 and 205-206 (DA). Residue Asp-224 is the Proton acceptor of the active site. Residue Tyr-292 coordinates putrescine.

It belongs to the spermidine/spermine synthase family. As to quaternary structure, heterodimer. Component of a multiprotein complex. Interacts with SPDSYN1 and SPDSYN2. Expressed predominantly in stem internodes, flower buds and roots.

It catalyses the reaction S-adenosyl 3-(methylsulfanyl)propylamine + spermidine = spermine + S-methyl-5'-thioadenosine + H(+). Its pathway is amine and polyamine biosynthesis; spermine biosynthesis; spermine from spermidine: step 1/1. The protein is Spermine synthase (SPMS) of Arabidopsis thaliana (Mouse-ear cress).